The chain runs to 249 residues: MALCEAVASGSPLVWPRVLLFGDSITQFSFQQGGWGASLADMLVRKCDVLNRGFSGYNTRWAKIILPRLVRKGSGLDSPVAVTIFFGANDSALKDENPKQHVPLEEFVANLRSMVRYLRSVDVPEGRLILITPPPLCEAAWAQECLQQGCKLNRLNSVVGEYARACLQVAQDCGADALDLWSLMQKDGQDFSSYLSDGLHLSPKGNEFVFSHLWPLIEKKVSSLPFLLPYWRDIAEARPELSLLGDGDH.

Catalysis depends on serine 24, which acts as the Nucleophile. At lysine 63 the chain carries N6-succinyllysine. Aspartate 197 acts as the Proton donor in catalysis. Histidine 200 functions as the Proton acceptor in the catalytic mechanism.

The protein belongs to the 'GDSL' lipolytic enzyme family. IAH1 subfamily.

Probable lipase. This is Isoamyl acetate-hydrolyzing esterase 1 homolog (IAH1) from Bos taurus (Bovine).